We begin with the raw amino-acid sequence, 149 residues long: Large ribosomal subunit protein uL15C (149 aa).

The interval 21–40 is disordered; it reads RIGKHRKQRGGRGNAGGQHH.

This sequence belongs to the universal ribosomal protein uL15 family. Component of the large ribosomal subunit.

It is found in the cytoplasm. The protein resides in the cytosol. It localises to the endoplasmic reticulum. Component of the large ribosomal subunit. The ribosome is a large ribonucleoprotein complex responsible for the synthesis of proteins in the cell. In Entamoeba histolytica (strain ATCC 30459 / HM-1:IMSS / ABRM), this protein is Large ribosomal subunit protein uL15C (rpl27a-3).